Reading from the N-terminus, the 262-residue chain is Carbonic anhydrase 13 (262 aa).

In terms of domain architecture, Alpha-carbonic anhydrase spans 4-261 (LSWGYREHNG…LKGRKVRASF (258 aa)). The active-site Proton donor/acceptor is His65. The Zn(2+) site is built by His95, His97, and His120. Residue 200 to 201 (TV) participates in substrate binding.

Belongs to the alpha-carbonic anhydrase family. It depends on Zn(2+) as a cofactor. As to expression, expressed in thymus, small intestine, spleen, prostate, ovary, colon and testis.

The catalysed reaction is hydrogencarbonate + H(+) = CO2 + H2O. With respect to regulation, inhibited by acetazolamide. Functionally, reversible hydration of carbon dioxide. This chain is Carbonic anhydrase 13 (CA13), found in Homo sapiens (Human).